The primary structure comprises 308 residues: Ribosomal RNA large subunit methyltransferase F (308 aa).

It belongs to the methyltransferase superfamily. METTL16/RlmF family.

The protein localises to the cytoplasm. The catalysed reaction is adenosine(1618) in 23S rRNA + S-adenosyl-L-methionine = N(6)-methyladenosine(1618) in 23S rRNA + S-adenosyl-L-homocysteine + H(+). Specifically methylates the adenine in position 1618 of 23S rRNA. The chain is Ribosomal RNA large subunit methyltransferase F from Escherichia coli O127:H6 (strain E2348/69 / EPEC).